The chain runs to 1221 residues: Adhesion G-protein coupled receptor G6 (1221 aa).

Positions 1–37 (MMFRSDRMWSCHWKWKPSPLLFLFALYIMCVPHSVWG) are cleaved as a signal peptide. The Extracellular segment spans residues 38 to 862 (CANCRVVLSN…ASQLDARNTK (825 aa)). A disulfide bond links Cys-41 and Cys-67. Residues 41–149 (CRVVLSNPSG…KGFNASYIRV (109 aa)) form the CUB domain. Residues Glu-89 and Asp-97 each contribute to the Ca(2+) site. Cys-94 and Cys-111 are oxidised to a cystine. Residue Asn-121 is glycosylated (N-linked (GlcNAc...) asparagine). Residues Asp-134, Ser-136, and Ile-137 each contribute to the Ca(2+) site. N-linked (GlcNAc...) asparagine glycosylation is found at Asn-143, Asn-206, Asn-258, Asn-314, Asn-324, Asn-353, Asn-438, Asn-445, Asn-452, Asn-485, Asn-488, and Asn-505. The region spanning 154 to 356 (RNQKVILPQT…ALKAESNLSC (203 aa)) is the Pentraxin (PTX) domain. Disulfide bonds link Cys-186–Cys-254 and Cys-231–Cys-277. Positions 473–837 (EPRLVLWALL…SDASETVCLC (365 aa)) are mediates interaction with laminin-2. 2 cysteine pairs are disulfide-bonded: Cys-525–Cys-560 and Cys-548–Cys-580. N-linked (GlcNAc...) asparagine glycosylation is found at Asn-563, Asn-593, Asn-600, Asn-605, Asn-667, Asn-673, Asn-695, Asn-704, Asn-750, Asn-776, Asn-811, and Asn-818. Positions 670–853 (SHVNITTRNL…GVLMDLPRSA (184 aa)) constitute a GAIN-B domain. Cystine bridges form between Cys-803–Cys-835 and Cys-822–Cys-837. The GPS stretch occupies residues 803–853 (CAFWDLNKNKSFGGWNTSGCVAHRDSDASETVCLCNHFTHFGVLMDLPRSA). Residues 842 to 850 (HFGVLMDLP) form a stachel region. A helical transmembrane segment spans residues 863–883 (VLTFISYIGCGISAIFSAATL). Topologically, residues 884 to 903 (LTYVAFEKLRRDYPSKILMN) are cytoplasmic. A helical membrane pass occupies residues 904-924 (LSTALLFLNLLFLLDGWITSF). Over 925 to 929 (NVDGL) the chain is Extracellular. The chain crosses the membrane as a helical span at residues 930 to 950 (CIAVAVLLHFFLLATFTWMGL). Residues 951–970 (EAIHMYIALVKVFNTYIRRY) lie on the Cytoplasmic side of the membrane. Residues 971–991 (ILKFCIIGWGLPALVVSVVLA) traverse the membrane as a helical segment. Residues 992–1024 (SRNNNEVYGKESYGKEKGDEFCWIQDPVIFYVT) lie on the Extracellular side of the membrane. Residues 1025-1045 (CAGYFGVMFFLNIAMFIVVMV) form a helical membrane-spanning segment. Residues 1046–1069 (QICGRNGKRSNRTLREEVLRNLRS) lie on the Cytoplasmic side of the membrane. A helical transmembrane segment spans residues 1070 to 1090 (VVSLTFLLGMTWGFAFFAWGP). Topologically, residues 1091–1092 (LN) are extracellular. The chain crosses the membrane as a helical span at residues 1093-1113 (IPFMYLFSIFNSLQGLFIFIF). Asn-1103 is a 17alpha-hydroxyprogesterone binding site. The Cytoplasmic segment spans residues 1114-1221 (HCAMKENVQK…GQVLVKTGPC (108 aa)). The disordered stretch occupies residues 1156–1176 (NLGKSLSSSSIGSNSTYLTSK). Ser-1165 and Ser-1168 each carry phosphoserine.

It belongs to the G-protein coupled receptor 2 family. Adhesion G-protein coupled receptor (ADGR) subfamily. In terms of assembly, heterodimer of 2 chains generated by proteolytic processing; the large extracellular N-terminal fragment and the membrane-bound C-terminal fragment predominantly remain associated and non-covalently linked. Interacts with Laminin-2; this interaction stabilizes the receptor in an inactive state. Laminin-2 polymerization could facilitate ADGRG6-NTF removal, thereby exposing the tethered agonist to drive myelination. Interacts with PRNP. Interacts with ITGB1. Interacts with LRP1. Post-translationally, proteolytically cleaved into 2 conserved sites: one in the GPS region of the GAIN-B domain (S1 site) and the other in the middle of the extracellular domain (S2 site). The proteolytic cleavage at S1 site generates an extracellular subunit and a seven-transmembrane subunit. Furin is involved in the cleavage of the S2 site generating a soluble fragment. Processing at the GPS region occurred independent of and probably prior to the cleavage at the S2 site. Proteolytic cleavage is required for activation of the receptor. In terms of processing, highly glycosylated. As to expression, expressed in placenta and to a lower extent in pancreas and liver. Detected in aortic endothelial cells but not in skin microvascular endothelial cells.

The protein resides in the cell membrane. With respect to regulation, forms a heterodimer of 2 chains generated by proteolytic processing that remain associated through non-covalent interactions mediated by the GAIN-B domain. In the inactivated receptor, the Stachel sequence (also named stalk) is embedded in the GAIN-B domain, where it adopts a beta-strand conformation. On activation, the Stachel moves into the 7 transmembrane region and adopts a twisted hook-shaped configuration that forms contacts within the receptor, leading to coupling of a G-alpha protein, which activates signaling. The cleaved GAIN-B and N-terminal domains can then dissociate from the rest of the receptor. Functionally, adhesion G-protein coupled receptor (aGPCR) for steroid hormones, such as progesterone and 17alpha-hydroxyprogesterone (17OHP). Involved in many biological processes, such as myelination, sprouting angiogenesis, placenta, ear and cartilage development. Ligand binding causes a conformation change that triggers signaling via guanine nucleotide-binding proteins (G proteins) and modulates the activity of downstream effectors, such as adenylate cyclase. ADGRG6 is coupled to G(i) G alpha proteins and mediates inhibition of adenylate cyclase. Also able to couple to G(q) G proteins. Involved in myelination of the peripheral nervous system: required for differentiation of promyelinating Schwann cells and for normal myelination of axons. Also acts as a regulator of body length and bone mass. Acts as a regulator of blood-brain barrier formation in the central nervous system vie its association with LRP1 and ITGB1. This chain is Adhesion G-protein coupled receptor G6, found in Homo sapiens (Human).